Consider the following 178-residue polypeptide: Conodipine-P1 (178 aa).

Positions 1–24 (MKLLAPVLWAMAALGVTWLVAVDS) are cleaved as a signal peptide. P38, P42, and P49 each carry 4-hydroxyproline; partial. The active site involves H54. A propeptide spans 98-130 (KREVTSHRATSIAHSRLWKTALDQKSFLNRKAR) (interchain peptide). Position 131 is a pyrrolidone carboxylic acid (Q131). The residue at position 137 (P137) is a 4-hydroxyproline; partial.

This sequence belongs to the phospholipase A2 family. Group IX subfamily. In terms of assembly, heterodimer of an alpha and a beta chain; probably disulfide-linked. Ca(2+) is required as a cofactor. As to expression, expressed by the venom duct.

The protein resides in the secreted. The enzyme catalyses a 1,2-diacyl-sn-glycero-3-phosphocholine + H2O = a 1-acyl-sn-glycero-3-phosphocholine + a fatty acid + H(+). Catalyzes the calcium-dependent hydrolysis of the 2-acyl groups in 3-sn-phosphoglycerides. This Conus purpurascens (Purple cone) protein is Conodipine-P1.